The sequence spans 241 residues: Chaperone protein FimC (241 aa).

The N-terminal stretch at 1–36 (MSNKNVNVRKSQEITFCLLAGILMFMAMMVAGRAEA) is a signal peptide.

Belongs to the periplasmic pilus chaperone family.

It localises to the periplasm. Its function is as follows. Required for the biogenesis of type 1 fimbriae. Binds and interact with FimH. This Escherichia coli (strain K12) protein is Chaperone protein FimC (fimC).